We begin with the raw amino-acid sequence, 195 residues long: Glutamyl-tRNA(Gln) amidotransferase subunit C, mitochondrial (195 aa).

A mitochondrion-targeting transit peptide spans 1-18; sequence MNLSTIGFQVIFKQRLRC.

It belongs to the GatC family. In terms of assembly, subunit of the heterotrimeric GatCAB amidotransferase (AdT) complex, composed of A, B and C subunits.

Its subcellular location is the mitochondrion. It catalyses the reaction L-glutamyl-tRNA(Gln) + L-glutamine + ATP + H2O = L-glutaminyl-tRNA(Gln) + L-glutamate + ADP + phosphate + H(+). Functionally, allows the formation of correctly charged Gln-tRNA(Gln) through the transamidation of misacylated Glu-tRNA(Gln) in the mitochondria. The reaction takes place in the presence of glutamine and ATP through an activated gamma-phospho-Glu-tRNA(Gln). The polypeptide is Glutamyl-tRNA(Gln) amidotransferase subunit C, mitochondrial (Brugia malayi (Filarial nematode worm)).